The following is a 171-amino-acid chain: Co-chaperone protein HscB homolog (171 aa).

The J domain occupies 2–74; the sequence is NHFELFGLPS…ISRAEYILAE (73 aa).

Belongs to the HscB family. In terms of assembly, interacts with HscA and stimulates its ATPase activity.

In terms of biological role, co-chaperone involved in the maturation of iron-sulfur cluster-containing proteins. Seems to help targeting proteins to be folded toward HscA. The protein is Co-chaperone protein HscB homolog of Vibrio campbellii (strain ATCC BAA-1116).